Consider the following 287-residue polypeptide: MLDDADIHPLFHNAPGTTEFKKLRKRIIRNVREAIDLYGMVEREAREGTKPRWLVCLSGGKDSYTLLAALTELQWRGLLPVEILACNLDQGQPGFPATVLPEFLERMGVPHRIEYQDTYSIVMDKVPAGRTYCALCSRLRRGNLYRIAREEGCSAVLLGHHRDDILETFFMNLFHGGRLATMPPKLVNEEGDLFVLRPLAHVAEADCARFAKALDYPIIPCDLCGSQDGLQRQQVKALLDGWEANSPGRRQVMFKALTNIRPSHMLDPNLFDFAGLGLADAFSENPK.

A PP-loop motif motif is present at residues 58–63; sequence SGGKDS. [4Fe-4S] cluster is bound by residues Cys-133, Cys-136, and Cys-224.

The protein belongs to the TtcA family. In terms of assembly, homodimer. Mg(2+) is required as a cofactor. Requires [4Fe-4S] cluster as cofactor.

It localises to the cytoplasm. The enzyme catalyses cytidine(32) in tRNA + S-sulfanyl-L-cysteinyl-[cysteine desulfurase] + AH2 + ATP = 2-thiocytidine(32) in tRNA + L-cysteinyl-[cysteine desulfurase] + A + AMP + diphosphate + H(+). It functions in the pathway tRNA modification. In terms of biological role, catalyzes the ATP-dependent 2-thiolation of cytidine in position 32 of tRNA, to form 2-thiocytidine (s(2)C32). The sulfur atoms are provided by the cysteine/cysteine desulfurase (IscS) system. The protein is tRNA-cytidine(32) 2-sulfurtransferase of Dinoroseobacter shibae (strain DSM 16493 / NCIMB 14021 / DFL 12).